Reading from the N-terminus, the 367-residue chain is Methylthioribose-1-phosphate isomerase (367 aa).

The Proton donor role is filled by Asp250.

Belongs to the eIF-2B alpha/beta/delta subunits family. MtnA subfamily.

It localises to the cytoplasm. Its subcellular location is the nucleus. It carries out the reaction 5-(methylsulfanyl)-alpha-D-ribose 1-phosphate = 5-(methylsulfanyl)-D-ribulose 1-phosphate. The protein operates within amino-acid biosynthesis; L-methionine biosynthesis via salvage pathway; L-methionine from S-methyl-5-thio-alpha-D-ribose 1-phosphate: step 1/6. Its function is as follows. Catalyzes the interconversion of methylthioribose-1-phosphate (MTR-1-P) into methylthioribulose-1-phosphate (MTRu-1-P). This Zea mays (Maize) protein is Methylthioribose-1-phosphate isomerase (IDI2).